Reading from the N-terminus, the 113-residue chain is Stigma/stylar cysteine-rich adhesin (113 aa).

An N-terminal signal peptide occupies residues 1-22 (MARSSAVCFLLLLAFLIGTASA). Intrachain disulfides connect Cys-25–Cys-72, Cys-35–Cys-49, Cys-50–Cys-95, and Cys-70–Cys-109.

Belongs to the plant LTP family. In terms of tissue distribution, highly expressed in style and stigma, abundant in young leaves and petals, and low expression in young anthers at pollen mother cell stage with an active tapetum. Not expressed in mature leaves or in pollen grains or tubes. Found in the stylar transmitting tract epidermis and in the stylar extracellular matrix.

In terms of biological role, acts as an adhesive agent between the pollen tube wall and the stylar transmitting tract epidermis. Binds a stylar pectin in a pH-dependent manner. Enhances activity of chemocyanin, a diffusible chemotropic factor. This chain is Stigma/stylar cysteine-rich adhesin (SCA), found in Lilium longiflorum (Trumpet lily).